A 110-amino-acid chain; its full sequence is Endoribonuclease SymE (110 aa).

In terms of domain architecture, SpoVT-AbrB spans 29-74 (SSYPEYTRIPAITLKGQWLEDAGFTTGTQVDVRVMNGCIVLTAQQP).

It belongs to the SymE family.

The protein localises to the cytoplasm. Involved in the degradation and recycling of damaged RNA. It is itself a target for degradation by the ATP-dependent protease Lon. The protein is Endoribonuclease SymE of Salmonella choleraesuis (strain SC-B67).